The chain runs to 161 residues: Nucleotide-binding protein Bmul_0741/BMULJ_02519 (161 aa).

The protein belongs to the YajQ family.

In terms of biological role, nucleotide-binding protein. The protein is Nucleotide-binding protein Bmul_0741/BMULJ_02519 of Burkholderia multivorans (strain ATCC 17616 / 249).